A 250-amino-acid chain; its full sequence is 3-deoxy-manno-octulosonate cytidylyltransferase (250 aa).

The protein belongs to the KdsB family.

The protein localises to the cytoplasm. It catalyses the reaction 3-deoxy-alpha-D-manno-oct-2-ulosonate + CTP = CMP-3-deoxy-beta-D-manno-octulosonate + diphosphate. It participates in nucleotide-sugar biosynthesis; CMP-3-deoxy-D-manno-octulosonate biosynthesis; CMP-3-deoxy-D-manno-octulosonate from 3-deoxy-D-manno-octulosonate and CTP: step 1/1. The protein operates within bacterial outer membrane biogenesis; lipopolysaccharide biosynthesis. In terms of biological role, activates KDO (a required 8-carbon sugar) for incorporation into bacterial lipopolysaccharide in Gram-negative bacteria. This Geobacter sulfurreducens (strain ATCC 51573 / DSM 12127 / PCA) protein is 3-deoxy-manno-octulosonate cytidylyltransferase.